The following is a 104-amino-acid chain: PTS system lactose-specific EIIA component (104 aa).

The PTS EIIA type-3 domain maps to 4–102 (EEATLLGFEI…MKHLIELYKR (99 aa)). His78 functions as the Tele-phosphohistidine intermediate in the catalytic mechanism. His78 bears the Phosphohistidine; by HPr mark. Residue Asp81 participates in Mg(2+) binding.

Homotrimer. The cofactor is Mg(2+).

Its subcellular location is the cytoplasm. Functionally, the phosphoenolpyruvate-dependent sugar phosphotransferase system (sugar PTS), a major carbohydrate active transport system, catalyzes the phosphorylation of incoming sugar substrates concomitantly with their translocation across the cell membrane. The enzyme II LacEF PTS system is involved in lactose transport. This is PTS system lactose-specific EIIA component from Streptococcus mutans serotype c (strain ATCC 700610 / UA159).